The following is a 425-amino-acid chain: Ribosome biogenesis protein WDR12 homolog (425 aa).

The ubiquitin-like (UBL) domain stretch occupies residues L13–E94. 7 WD repeats span residues L106–I143, G145–E187, G194–D233, G258–E296, S298–V337, G343–F383, and G387–K425. The disordered stretch occupies residues V227–G247.

This sequence belongs to the WD repeat WDR12/YTM1 family.

Its subcellular location is the nucleus. It is found in the nucleolus. The protein resides in the nucleoplasm. Its function is as follows. Required for maturation of ribosomal RNAs and formation of the large ribosomal subunit. The chain is Ribosome biogenesis protein WDR12 homolog from Culex quinquefasciatus (Southern house mosquito).